The following is a 443-amino-acid chain: Acid phosphatase type 7 (443 aa).

The first 23 residues, 1 to 23, serve as a signal peptide directing secretion; sequence MAAAPPPPPPLLLLLLCVCAVFA. Residues asparagine 53, asparagine 76, and asparagine 126 are each glycosylated (N-linked (GlcNAc...) asparagine). Fe cation-binding residues include aspartate 140, aspartate 169, and tyrosine 172. Aspartate 169 lines the Zn(2+) pocket. Zn(2+) is bound at residue asparagine 204. The N-linked (GlcNAc...) asparagine glycan is linked to asparagine 210. Residue histidine 288 participates in Zn(2+) binding. N-linked (GlcNAc...) asparagine glycosylation occurs at asparagine 313. A Zn(2+)-binding site is contributed by histidine 338. Residue histidine 340 coordinates Fe cation. 2 N-linked (GlcNAc...) asparagine glycosylation sites follow: asparagine 355 and asparagine 409.

This sequence belongs to the metallophosphoesterase superfamily. Purple acid phosphatase family. Requires Fe cation as cofactor. Zn(2+) is required as a cofactor.

It localises to the secreted. It catalyses the reaction a phosphate monoester + H2O = an alcohol + phosphate. The chain is Acid phosphatase type 7 from Danio rerio (Zebrafish).